Here is a 124-residue protein sequence, read N- to C-terminus: Small ribosomal subunit protein uS13 (124 aa).

Residues 95–124 are disordered; that stretch reads GLPVRGQRTHTNARTRKGPRRSVMGKRKKA.

This sequence belongs to the universal ribosomal protein uS13 family. Part of the 30S ribosomal subunit. Forms a loose heterodimer with protein S19. Forms two bridges to the 50S subunit in the 70S ribosome.

In terms of biological role, located at the top of the head of the 30S subunit, it contacts several helices of the 16S rRNA. In the 70S ribosome it contacts the 23S rRNA (bridge B1a) and protein L5 of the 50S subunit (bridge B1b), connecting the 2 subunits; these bridges are implicated in subunit movement. Contacts the tRNAs in the A and P-sites. This chain is Small ribosomal subunit protein uS13, found in Syntrophobacter fumaroxidans (strain DSM 10017 / MPOB).